Consider the following 73-residue polypeptide: Crustacean hyperglycemic hormone (73 aa).

Disulfide bonds link Cys-7/Cys-43, Cys-23/Cys-39, and Cys-26/Cys-52. Residue Val-73 is modified to Valine amide.

It belongs to the arthropod CHH/MIH/GIH/VIH hormone family. In terms of tissue distribution, produced by the medulla terminalis X-organ in the eyestalks and transported to the sinus gland where they are stored and released.

The protein localises to the secreted. Its function is as follows. Hormone found in the sinus gland of isopods and decapods which controls the blood sugar level. Has a secretagogue action over the amylase released from the midgut gland. May act as a stress hormone and may be involved in the control of molting and reproduction. The sequence is that of Crustacean hyperglycemic hormone from Jasus lalandii (Cape rock lobster).